A 129-amino-acid chain; its full sequence is Small ribosomal subunit protein uS11 (129 aa).

Belongs to the universal ribosomal protein uS11 family. Part of the 30S ribosomal subunit. Interacts with proteins S7 and S18. Binds to IF-3.

Located on the platform of the 30S subunit, it bridges several disparate RNA helices of the 16S rRNA. Forms part of the Shine-Dalgarno cleft in the 70S ribosome. This is Small ribosomal subunit protein uS11 from Erwinia tasmaniensis (strain DSM 17950 / CFBP 7177 / CIP 109463 / NCPPB 4357 / Et1/99).